The following is a 279-amino-acid chain: Pantothenate synthetase (279 aa).

ATP is bound at residue 27–34 (MGYLHEGH). Histidine 34 serves as the catalytic Proton donor. Glutamine 58 is a (R)-pantoate binding site. Glutamine 58 is a binding site for beta-alanine. 144 to 147 (GKKD) lines the ATP pocket. Residue glutamine 150 participates in (R)-pantoate binding. ATP is bound by residues valine 173 and 181-184 (MSSR).

This sequence belongs to the pantothenate synthetase family. As to quaternary structure, homodimer.

Its subcellular location is the cytoplasm. The catalysed reaction is (R)-pantoate + beta-alanine + ATP = (R)-pantothenate + AMP + diphosphate + H(+). It functions in the pathway cofactor biosynthesis; (R)-pantothenate biosynthesis; (R)-pantothenate from (R)-pantoate and beta-alanine: step 1/1. In terms of biological role, catalyzes the condensation of pantoate with beta-alanine in an ATP-dependent reaction via a pantoyl-adenylate intermediate. This chain is Pantothenate synthetase, found in Geobacter sp. (strain M21).